The following is a 387-amino-acid chain: Probable protein phosphatase 2C 25 (387 aa).

One can recognise a PPM-type phosphatase domain in the interval 52–351 (EFSFAVVQAN…DDITVVVVYI (300 aa)). The Mn(2+) site is built by Asp-83, Gly-84, Asp-283, and Asp-342.

This sequence belongs to the PP2C family. Requires Mg(2+) as cofactor. Mn(2+) serves as cofactor.

The enzyme catalyses O-phospho-L-seryl-[protein] + H2O = L-seryl-[protein] + phosphate. It catalyses the reaction O-phospho-L-threonyl-[protein] + H2O = L-threonyl-[protein] + phosphate. In Oryza sativa subsp. japonica (Rice), this protein is Probable protein phosphatase 2C 25.